We begin with the raw amino-acid sequence, 323 residues long: Ferrochelatase (323 aa).

Positions 196 and 277 each coordinate Fe cation.

Belongs to the ferrochelatase family.

It localises to the cytoplasm. The enzyme catalyses heme b + 2 H(+) = protoporphyrin IX + Fe(2+). It participates in porphyrin-containing compound metabolism; protoheme biosynthesis; protoheme from protoporphyrin-IX: step 1/1. In terms of biological role, catalyzes the ferrous insertion into protoporphyrin IX. The chain is Ferrochelatase from Haemophilus influenzae (strain PittEE).